A 521-amino-acid polypeptide reads, in one-letter code: Outer membrane protein assembly factor BamB (521 aa).

The signal sequence occupies residues 1 to 19 (MKKLFLVIVPLLLSLLATS). Cysteine 20 is lipidated: N-palmitoyl cysteine. Cysteine 20 is lipidated: S-diacylglycerol cysteine. A disordered region spans residues 418–521 (KSGSIESSPK…IGDFSKGDSD (104 aa)). Positions 429-444 (LPDKKVDSNKTSKNDT) are enriched in basic and acidic residues. Polar residues predominate over residues 445 to 477 (DSNPATTATSTKDIQNPANQEMINSTPVSNTST).

This sequence belongs to the BamB family. As to quaternary structure, part of the Bam complex.

It is found in the cell outer membrane. Functionally, part of the outer membrane protein assembly complex, which is involved in assembly and insertion of beta-barrel proteins into the outer membrane. The protein is Outer membrane protein assembly factor BamB of Francisella salina.